Consider the following 670-residue polypeptide: Mannosyl-oligosaccharide alpha-1,2-mannosidase IA (670 aa).

Over methionine 1–lysine 30 the chain is Cytoplasmic. Residues tyrosine 31 to leucine 51 traverse the membrane as a helical; Signal-anchor for type II membrane protein segment. The Lumenal segment spans residues proline 52 to isoleucine 670. N-linked (GlcNAc...) asparagine glycosylation is present at asparagine 61. Residues aspartate 135–serine 177 form a disordered region. Residues cysteine 480 and cysteine 512 are joined by a disulfide bond. The active-site Proton donor is glutamate 526. Threonine 637 serves as a coordination point for Ca(2+).

The protein belongs to the glycosyl hydrolase 47 family. Requires Ca(2+) as cofactor. N-glycosylated. Contains high mannose-type oligosaccharides.

The protein localises to the golgi apparatus membrane. The enzyme catalyses N(4)-(alpha-D-Man-(1-&gt;2)-alpha-D-Man-(1-&gt;2)-alpha-D-Man-(1-&gt;3)-[alpha-D-Man-(1-&gt;2)-alpha-D-Man-(1-&gt;3)-[alpha-D-Man-(1-&gt;2)-alpha-D-Man-(1-&gt;6)]-alpha-D-Man-(1-&gt;6)]-beta-D-Man-(1-&gt;4)-beta-D-GlcNAc-(1-&gt;4)-beta-D-GlcNAc)-L-asparaginyl-[protein] (N-glucan mannose isomer 9A1,2,3B1,2,3) + 4 H2O = N(4)-(alpha-D-Man-(1-&gt;3)-[alpha-D-Man-(1-&gt;3)-[alpha-D-Man-(1-&gt;6)]-alpha-D-Man-(1-&gt;6)]-beta-D-Man-(1-&gt;4)-beta-D-GlcNAc-(1-&gt;4)-beta-D-GlcNAc)-L-asparaginyl-[protein] (N-glucan mannose isomer 5A1,2) + 4 beta-D-mannose. The catalysed reaction is N(4)-(alpha-D-Man-(1-&gt;2)-alpha-D-Man-(1-&gt;2)-alpha-D-Man-(1-&gt;3)-[alpha-D-Man-(1-&gt;3)-[alpha-D-Man-(1-&gt;2)-alpha-D-Man-(1-&gt;6)]-alpha-D-Man-(1-&gt;6)]-beta-D-Man-(1-&gt;4)-beta-D-GlcNAc-(1-&gt;4)-beta-D-GlcNAc)-L-asparaginyl-[protein] (N-glucan mannose isomer 8A1,2,3B1,3) + 3 H2O = N(4)-(alpha-D-Man-(1-&gt;3)-[alpha-D-Man-(1-&gt;3)-[alpha-D-Man-(1-&gt;6)]-alpha-D-Man-(1-&gt;6)]-beta-D-Man-(1-&gt;4)-beta-D-GlcNAc-(1-&gt;4)-beta-D-GlcNAc)-L-asparaginyl-[protein] (N-glucan mannose isomer 5A1,2) + 3 beta-D-mannose. Its pathway is protein modification; protein glycosylation. With respect to regulation, strongly inhibited by 1-deoxymannojirimycin, an inhibitor of class I alpha-mannosidases, and by EDTA. EDTA inhibition is reversed by the addition of calcium, but not of magnesium. Functionally, involved in the maturation of Asn-linked oligosaccharides. Converts Man(9)GlcNAc(2) to Man(5)GlcNAc(2) primarily through the Man(7)GlcNAc(2) isomer C processing intermediate. The polypeptide is Mannosyl-oligosaccharide alpha-1,2-mannosidase IA (Spodoptera frugiperda (Fall armyworm)).